We begin with the raw amino-acid sequence, 1391 residues long: Eukaryotic translation initiation factor 3 subunit A (1391 aa).

The region spanning 315-498 (MQRMSTRVLL…RTLSFGSDLN (184 aa)) is the PCI domain. Basic and acidic residues-rich tracts occupy residues 809–921 (DKEE…RGGP), 940–959 (AALR…EKVS), 966–1234 (EKGG…RDQT), 1246–1257 (GWREREKAREDS), 1265–1307 (QAPE…ETPR), and 1313–1380 (DSDR…IKPE). A disordered region spans residues 809–1391 (DKEEEEERLR…DEDGWTTVRR (583 aa)). 2 tandem repeats follow at residues 973–982 (DEDRGPKRGL) and 983–992 (EEDRGPRRGI). Residues 973 to 1229 (DEDRGPKRGL…DDDRGPRRGE (257 aa)) form a 26 X 10 AA approximate tandem repeats of [DE]-[DE]-[DE]-R-[GATV]-[PS]-[KRW]-R-G-[AEFGIL] region. Residues 993–1001 (DDAGPRRGF) form a 3; approximate repeat. 20 tandem repeats follow at residues 1002 to 1011 (EEDRGPRRGI), 1012 to 1021 (EDDRAPRRGF), 1022 to 1031 (DDDRGPRRGF), 1032 to 1041 (DDDRGPRRGF), 1042 to 1051 (DEDRGPRRGI), 1052 to 1061 (DDDRGPRRGF), 1062 to 1071 (DEDRTPRRGF), 1072 to 1081 (DDDRGPRRGF), 1082 to 1091 (DDDRGPRRGF), 1092 to 1101 (DEDRGPRRGF), 1102 to 1111 (EDDRGPRRGF), 1112 to 1120 (EDDRGPRRG), 1122 to 1131 (EDDRGPRRGF), 1132 to 1141 (EDDRGPRRGF), 1142 to 1151 (EDDRGPRRGF), 1152 to 1161 (DEDRGPRRGF), 1162 to 1171 (EDDRGPRRGF), 1172 to 1181 (DEDRTPRRGF), 1182 to 1191 (DDDRGPRRGL), and 1192 to 1201 (DEDRGSWRGG). Residues 1202–1209 (DDVPRRGA) form a 24; approximate repeat. Repeat copies occupy residues 1210–1219 (DDDRGPRRGA) and 1220–1229 (DDDRGPRRGE).

Belongs to the eIF-3 subunit A family. Component of the eukaryotic translation initiation factor 3 (eIF-3) complex, which is composed of 13 subunits: eif3a, eif3b, eif3c, eif3d, eif3e, eif3f, eif3g, eif3h, eif3i, eif3j, eif3k, eif3l and eif3m.

It localises to the cytoplasm. In terms of biological role, RNA-binding component of the eukaryotic translation initiation factor 3 (eIF-3) complex, which is involved in protein synthesis of a specialized repertoire of mRNAs and, together with other initiation factors, stimulates binding of mRNA and methionyl-tRNAi to the 40S ribosome. The eIF-3 complex specifically targets and initiates translation of a subset of mRNAs involved in cell proliferation. The chain is Eukaryotic translation initiation factor 3 subunit A (eif3a) from Xenopus tropicalis (Western clawed frog).